We begin with the raw amino-acid sequence, 315 residues long: uncharacterized protein (315 aa).

Transmembrane regions (helical) follow at residues Ile-18–Gly-38, Ile-202–Ile-222, and Leu-244–Leu-264. The interval Val-288–Ala-315 is disordered.

Its subcellular location is the membrane. This is an uncharacterized protein from Saccharomyces cerevisiae (strain ATCC 204508 / S288c) (Baker's yeast).